A 237-amino-acid polypeptide reads, in one-letter code: D-aminoacyl-tRNA deacylase (237 aa).

The protein belongs to the DtdA deacylase family. Monomer. Requires Zn(2+) as cofactor.

It catalyses the reaction a D-aminoacyl-tRNA + H2O = a tRNA + a D-alpha-amino acid + H(+). It carries out the reaction glycyl-tRNA(Ala) + H2O = tRNA(Ala) + glycine + H(+). Its function is as follows. D-aminoacyl-tRNA deacylase with broad substrate specificity. By recycling D-aminoacyl-tRNA to D-amino acids and free tRNA molecules, this enzyme counteracts the toxicity associated with the formation of D-aminoacyl-tRNA entities in vivo. This chain is D-aminoacyl-tRNA deacylase, found in Sulfurisphaera tokodaii (strain DSM 16993 / JCM 10545 / NBRC 100140 / 7) (Sulfolobus tokodaii).